The sequence spans 378 residues: uncharacterized protein (378 aa).

This is an uncharacterized protein from Orgyia pseudotsugata multicapsid polyhedrosis virus (OpMNPV).